The chain runs to 365 residues: Phosphatidylcholine:ceramide cholinephosphotransferase 2 (365 aa).

The segment covering 1–14 has biased composition (basic and acidic residues); the sequence is MDIIETAKLEEHLE. Residues 1–52 are disordered; it reads MDIIETAKLEEHLENQPSDPTNTYARPAEPVEEENKNGNGKPKSLSSGLRKG. The span at 15-24 shows a compositional bias: polar residues; that stretch reads NQPSDPTNTY. 4 helical membrane-spanning segments follow: residues 80–100, 128–148, 159–179, and 206–226; these read GIAFIYAVFNLVLTTVMITVV, FSVSEINGIILVGLWITQWLF, FCFIIGTLYLYRCITMYVTTL, and LISGGGLSITGSHILCGDFLF. The active site involves histidine 229. Residues 248–268 form a helical membrane-spanning segment; sequence FWWYHLICWLLSAAGIICILV. Active-site residues include histidine 272 and aspartate 276. The chain crosses the membrane as a helical span at residues 275-295; the sequence is IDVIIAYYITTRLFWWYHSMA. The Cytoplasmic segment spans residues 296-365; the sequence is NEKNLKVSSQ…KIGEDNEKST (70 aa). 4 S-palmitoyl cysteine lipidation sites follow: cysteine 331, cysteine 332, cysteine 343, and cysteine 348.

This sequence belongs to the sphingomyelin synthase family. Palmitoylated on Cys-331, Cys-332, Cys-343 and Cys-348; which plays an important role in plasma membrane localization. As to expression, brain, heart, kidney, liver, muscle and stomach. Also expressed in a number of cell lines such as carcinoma HeLa cells, hepatoma Hep-G2 cells, and colon carcinoma Caco-2 cells.

It localises to the cell membrane. Its subcellular location is the golgi apparatus membrane. It carries out the reaction an N-acylsphing-4-enine + a 1,2-diacyl-sn-glycero-3-phosphocholine = a sphingomyelin + a 1,2-diacyl-sn-glycerol. The catalysed reaction is an N-acylsphinganine + a 1,2-diacyl-sn-glycero-3-phosphocholine = an N-acylsphinganine-1-phosphocholine + a 1,2-diacyl-sn-glycerol. It catalyses the reaction an N-acyl-(4R)-4-hydroxysphinganine + a 1,2-diacyl-sn-glycero-3-phosphocholine = an N-acyl-(4R)-4-hydroxysphinganine-phosphocholine + a 1,2-diacyl-sn-glycerol. The enzyme catalyses an N-acylsphinganine + a 1,2-diacyl-sn-glycero-3-phosphoethanolamine = an N-acylsphinganine-1-phosphoethanolamine + a 1,2-diacyl-sn-glycerol. It carries out the reaction an N-acyl-(4R)-4-hydroxysphinganine + a 1,2-diacyl-sn-glycero-3-phosphoethanolamine = an N-acyl-(4R)-4-hydroxysphinganine-1-phosphoethanolamine + a 1,2-diacyl-sn-glycerol. The catalysed reaction is an N-acylsphing-4-enine + a 1,2-diacyl-sn-glycero-3-phosphoethanolamine = an N-acylsphing-4-enine 1-phosphoethanolamine + a 1,2-diacyl-sn-glycerol. It catalyses the reaction 1,2-dihexadecanoyl-sn-glycero-3-phosphocholine + an N-acylsphing-4-enine = 1,2-dihexadecanoyl-sn-glycerol + a sphingomyelin. The enzyme catalyses 1-(9Z-octadecenoyl)-2-acyl-sn-3-glycerol + a sphingomyelin = a 1-(9Z-octadecenoyl)-2-acyl-sn-glycero-3-phosphocholine + an N-acylsphing-4-enine. It carries out the reaction N-hexadecanoylsphinganine + a 1,2-diacyl-sn-glycero-3-phosphocholine = N-hexadecanoyl-sphinganine-1-phosphocholine + a 1,2-diacyl-sn-glycerol. The catalysed reaction is N-hexadecanoyl-(4R)-hydroxysphinganine + a 1,2-diacyl-sn-glycero-3-phosphocholine = N-hexadecanoyl-(4R)-hydroxysphinganine-phosphocholine + a 1,2-diacyl-sn-glycerol. It catalyses the reaction N-hexadecanoylsphinganine + a 1,2-diacyl-sn-glycero-3-phosphoethanolamine = N-hexadecanoyl-sphinganine-1-phosphoethanolamine + a 1,2-diacyl-sn-glycerol. The enzyme catalyses N-hexadecanoyl-(4R)-hydroxysphinganine + a 1,2-diacyl-sn-glycero-3-phosphoethanolamine = N-hexadecanoyl-(4R)-hydroxysphinganine-1-phosphoethanolamine + a 1,2-diacyl-sn-glycerol. The protein operates within sphingolipid metabolism. Its activity is regulated as follows. Inhibited by bacterial PC-phospholipase C inhibitor D609. In terms of biological role, sphingomyelin synthase that primarily contributes to sphingomyelin synthesis and homeostasis at the plasma membrane. Catalyzes the reversible transfer of phosphocholine moiety in sphingomyelin biosynthesis: in the forward reaction transfers phosphocholine head group of phosphatidylcholine (PC) on to ceramide (CER) to form ceramide phosphocholine (sphingomyelin, SM) and diacylglycerol (DAG) as by-product, and in the reverse reaction transfers phosphocholine from SM to DAG to form PC and CER. The direction of the reaction appears to depend on the levels of CER and DAG in the plasma membrane. Does not use free phosphorylcholine or CDP-choline as donors. Can also transfer phosphoethanolamine head group of phosphatidylethanolamine (PE) on to ceramide (CER) to form ceramide phosphoethanolamine (CPE). Regulates receptor-mediated signal transduction via mitogenic DAG and proapoptotic CER, as well as via SM, a structural component of membrane rafts that serve as platforms for signal transduction and protein sorting. To a lesser extent, plays a role in secretory transport via regulation of DAG pool at the Golgi apparatus and its downstream effects on PRKD1. Required for normal bone matrix mineralization. The chain is Phosphatidylcholine:ceramide cholinephosphotransferase 2 from Homo sapiens (Human).